Reading from the N-terminus, the 172-residue chain is DNA-directed RNA polymerase II subunit rpb7 (172 aa).

This sequence belongs to the eukaryotic RPB7/RPC8 RNA polymerase subunit family. As to quaternary structure, component of the RNA polymerase II (Pol II) complex consisting of 12 subunits. RPB4 and RPB7 form a subcomplex that protrudes from the 10-subunit Pol II core complex.

Its subcellular location is the nucleus. Functionally, DNA-dependent RNA polymerase catalyzes the transcription of DNA into RNA using the four ribonucleoside triphosphates as substrates. Component of RNA polymerase II which synthesizes mRNA precursors and many functional non-coding RNAs. Pol II is the central component of the basal RNA polymerase II transcription machinery. It is composed of mobile elements that move relative to each other. RPB7 is part of a subcomplex with RPB4 that binds to a pocket formed by RPB1, RPB2 and RPB6 at the base of the clamp element. The RPB4-RPB7 subcomplex seems to lock the clamp via RPB7 in the closed conformation thus preventing double-stranded DNA to enter the active site cleft. The RPB4-RPB7 subcomplex binds single-stranded DNA and RNA. The polypeptide is DNA-directed RNA polymerase II subunit rpb7 (polr2g) (Dictyostelium discoideum (Social amoeba)).